The following is a 464-amino-acid chain: Glutamate--tRNA ligase 2 (464 aa).

The 'HIGH' region signature appears at 11–21; that stretch reads PSPTGFLHIGS. Residues 240–244 carry the 'KMSKS' region motif; the sequence is KLSKR. Lys-243 contributes to the ATP binding site.

This sequence belongs to the class-I aminoacyl-tRNA synthetase family. Glutamate--tRNA ligase type 1 subfamily. As to quaternary structure, monomer.

It is found in the cytoplasm. It carries out the reaction tRNA(Glu) + L-glutamate + ATP = L-glutamyl-tRNA(Glu) + AMP + diphosphate. In terms of biological role, catalyzes the attachment of glutamate to tRNA(Glu) in a two-step reaction: glutamate is first activated by ATP to form Glu-AMP and then transferred to the acceptor end of tRNA(Glu). The chain is Glutamate--tRNA ligase 2 from Rickettsia bellii (strain OSU 85-389).